A 237-amino-acid chain; its full sequence is Uridylate kinase (237 aa).

9–12 (KLSG) contributes to the ATP binding site. UMP is bound at residue glycine 51. ATP is bound by residues glycine 52 and arginine 56. Residues aspartate 71 and 132–139 (CGNPFFTT) contribute to the UMP site. Threonine 159, tyrosine 165, and aspartate 168 together coordinate ATP.

It belongs to the UMP kinase family. In terms of assembly, homohexamer.

The protein localises to the cytoplasm. The catalysed reaction is UMP + ATP = UDP + ADP. It participates in pyrimidine metabolism; CTP biosynthesis via de novo pathway; UDP from UMP (UMPK route): step 1/1. With respect to regulation, inhibited by UTP. Functionally, catalyzes the reversible phosphorylation of UMP to UDP. The polypeptide is Uridylate kinase (Prochlorococcus marinus (strain MIT 9313)).